The following is a 284-amino-acid chain: Bifunctional protein FolD (284 aa).

NADP(+) contacts are provided by residues G163 to S165, S188, and I229.

It belongs to the tetrahydrofolate dehydrogenase/cyclohydrolase family. In terms of assembly, homodimer.

It carries out the reaction (6R)-5,10-methylene-5,6,7,8-tetrahydrofolate + NADP(+) = (6R)-5,10-methenyltetrahydrofolate + NADPH. The enzyme catalyses (6R)-5,10-methenyltetrahydrofolate + H2O = (6R)-10-formyltetrahydrofolate + H(+). Its pathway is one-carbon metabolism; tetrahydrofolate interconversion. In terms of biological role, catalyzes the oxidation of 5,10-methylenetetrahydrofolate to 5,10-methenyltetrahydrofolate and then the hydrolysis of 5,10-methenyltetrahydrofolate to 10-formyltetrahydrofolate. The chain is Bifunctional protein FolD from Campylobacter hominis (strain ATCC BAA-381 / DSM 21671 / CCUG 45161 / LMG 19568 / NCTC 13146 / CH001A).